The chain runs to 298 residues: MSKLISYAAKNTLRNTRLGANPICQHATRDYMHLAAASAARNTYSTPAVGFAKQPVLRQAVNTVAVMGQISRRSMFIQTQDTPNPESLKFLPGVDVLGKGNTYDFPSGSAAHCSPLAKLLFRVEGVRAVFFGGDFITISKEESGEWGLIKPEVFAVIMDFFASGLPVIHEARPNADTEILEDDDETVMMIKELLDTRIRPTVQEDGGDIVFMGYENGIVKLKMQGSCSSCPSSIVTLKNGVQNMLQFYIPEVESVEQVFDDADKMANKEFERFEKSLMQKESVNQPNAPVNIGGGTPN.

The nifU stretch occupies residues 190–258 (IKELLDTRIR…IPEVESVEQV (69 aa)). [4Fe-4S] cluster-binding residues include Cys227 and Cys230. The span at 279–288 (QKESVNQPNA) shows a compositional bias: polar residues. The disordered stretch occupies residues 279–298 (QKESVNQPNAPVNIGGGTPN).

This sequence belongs to the NifU family.

It is found in the mitochondrion. Functionally, molecular scaffold for [Fe-S] cluster assembly of mitochondrial iron-sulfur proteins. The chain is NFU1 iron-sulfur cluster scaffold homolog, mitochondrial from Drosophila virilis (Fruit fly).